We begin with the raw amino-acid sequence, 163 residues long: 2-C-methyl-D-erythritol 2,4-cyclodiphosphate synthase (163 aa).

A divalent metal cation-binding residues include Asp12 and His14. 4-CDP-2-C-methyl-D-erythritol 2-phosphate contacts are provided by residues 12-14 and 38-39; these read DVH and HS. His46 contributes to the a divalent metal cation binding site. 4-CDP-2-C-methyl-D-erythritol 2-phosphate contacts are provided by residues 60-62, 65-69, 136-139, Phe143, and Arg146; these read DIG, FPDTD, and TTTE.

The protein belongs to the IspF family. In terms of assembly, homotrimer. The cofactor is a divalent metal cation.

It carries out the reaction 4-CDP-2-C-methyl-D-erythritol 2-phosphate = 2-C-methyl-D-erythritol 2,4-cyclic diphosphate + CMP. The protein operates within isoprenoid biosynthesis; isopentenyl diphosphate biosynthesis via DXP pathway; isopentenyl diphosphate from 1-deoxy-D-xylulose 5-phosphate: step 4/6. In terms of biological role, involved in the biosynthesis of isopentenyl diphosphate (IPP) and dimethylallyl diphosphate (DMAPP), two major building blocks of isoprenoid compounds. Catalyzes the conversion of 4-diphosphocytidyl-2-C-methyl-D-erythritol 2-phosphate (CDP-ME2P) to 2-C-methyl-D-erythritol 2,4-cyclodiphosphate (ME-CPP) with a corresponding release of cytidine 5-monophosphate (CMP). The polypeptide is 2-C-methyl-D-erythritol 2,4-cyclodiphosphate synthase (Acinetobacter baylyi (strain ATCC 33305 / BD413 / ADP1)).